A 94-amino-acid polypeptide reads, in one-letter code: DNA-binding protein HU (94 aa).

Residues 55–94 (RAERPGRNPKTGEPIMIAASNNPSFKPGKALKDAVKSSAG) are disordered. Over residues 84–94 (ALKDAVKSSAG) the composition is skewed to basic and acidic residues.

Belongs to the bacterial histone-like protein family.

Its function is as follows. Histone-like DNA-binding protein which is capable of wrapping DNA to stabilize it, and thus to prevent its denaturation under extreme environmental conditions. The sequence is that of DNA-binding protein HU (hup) from Xylella fastidiosa (strain Temecula1 / ATCC 700964).